The chain runs to 55 residues: ATP synthase F(0) complex subunit 8 (55 aa).

Residues Leu4 to Leu24 traverse the membrane as a helical segment. Residues Met36–Ala55 are disordered.

The protein belongs to the ATPase protein 8 family. Component of the ATP synthase complex composed at least of ATP5F1A/subunit alpha, ATP5F1B/subunit beta, ATP5MC1/subunit c (homooctomer), MT-ATP6/subunit a, MT-ATP8/subunit 8, ATP5ME/subunit e, ATP5MF/subunit f, ATP5MG/subunit g, ATP5MK/subunit k, ATP5MJ/subunit j, ATP5F1C/subunit gamma, ATP5F1D/subunit delta, ATP5F1E/subunit epsilon, ATP5PF/subunit F6, ATP5PB/subunit b, ATP5PD/subunit d, ATP5PO/subunit OSCP. ATP synthase complex consists of a soluble F(1) head domain (subunits alpha(3) and beta(3)) - the catalytic core - and a membrane F(0) domain - the membrane proton channel (subunits c, a, 8, e, f, g, k and j). These two domains are linked by a central stalk (subunits gamma, delta, and epsilon) rotating inside the F1 region and a stationary peripheral stalk (subunits F6, b, d, and OSCP).

It localises to the mitochondrion membrane. Functionally, subunit 8, of the mitochondrial membrane ATP synthase complex (F(1)F(0) ATP synthase or Complex V) that produces ATP from ADP in the presence of a proton gradient across the membrane which is generated by electron transport complexes of the respiratory chain. ATP synthase complex consist of a soluble F(1) head domain - the catalytic core - and a membrane F(1) domain - the membrane proton channel. These two domains are linked by a central stalk rotating inside the F(1) region and a stationary peripheral stalk. During catalysis, ATP synthesis in the catalytic domain of F(1) is coupled via a rotary mechanism of the central stalk subunits to proton translocation. In vivo, can only synthesize ATP although its ATP hydrolase activity can be activated artificially in vitro. Part of the complex F(0) domain. The protein is ATP synthase F(0) complex subunit 8 of Latimeria chalumnae (Coelacanth).